The sequence spans 496 residues: Cytochrome P450 monooxygenase cle4 (496 aa).

Residues F12–Y34 form a helical membrane-spanning segment. C435 provides a ligand contact to heme.

The protein belongs to the cytochrome P450 family. The cofactor is heme.

The protein localises to the membrane. It functions in the pathway secondary metabolite biosynthesis; terpenoid biosynthesis. Its function is as follows. Cytochrome P450 monooxygenase; part of the cluster A that mediates the biosynthesis of chevalone E and its oxidized derivatives that possess a unique five-membered lactone ring and can synergistically enhance the cytotoxicity of doxorubicin (DOX) in breast cancer cells. Within the pathway, cle4 is involved in hydroxylation of the chavalone E scaffold at positions C-11 and C-12 and contributes with cle2 to the production of seven oxidation derivatives. The molecular scaffold is commonly biosynthesized by a series of enzymes including the non-reducing polyketide synthase (NR-PKS) cle1 that produces the alpha-pyrone triacetic acid lactone (TAL); The membrane-bound prenyltransferase cle5 that accepts TAL as its substrate to perform a C-3 geranylgeranylation reaction, in which the pathway-dedicated GGPS cle6 is required to provide GGPP, the other substrate of cle5; the FAD-dependent monooxygenase Cle3 that forms an (S)-epoxide ring at the terminal olefin of the geranylgeranyl group; and the terpene cyclase Cle7 that catalyzes the cyclization of the prenyl group that yields the pentacyclic pathway intermediate chevalone E. Chevalone E can derivatize into seven new oxidized analogs by the cytochrome P450 monooxygenases cle2 (acting at C-20) and cle4 (acting at C-11 and C-12). This chain is Cytochrome P450 monooxygenase cle4, found in Aspergillus versicolor.